We begin with the raw amino-acid sequence, 115 residues long: Class I hydrophobin C (115 aa).

An N-terminal signal peptide occupies residues 1 to 19 (MFSRVLVAALVALPVLVSA). Disulfide bonds link Cys-36–Cys-93, Cys-43–Cys-87, Cys-44–Cys-74, and Cys-94–Cys-108.

This sequence belongs to the fungal hydrophobin family. Self-assembles to form functional amyloid fibrils called rodlets. Self-assembly into fibrillar rodlets occurs spontaneously at hydrophobic:hydrophilic interfaces and the rodlets further associate laterally to form amphipathic monolayers.

The protein resides in the secreted. Its subcellular location is the cell wall. Its function is as follows. Aerial growth, conidiation, and dispersal of filamentous fungi in the environment rely upon a capability of their secreting small amphipathic proteins called hydrophobins (HPBs) with low sequence identity. Class I can self-assemble into an outermost layer of rodlet bundles on aerial cell surfaces, conferring cellular hydrophobicity that supports fungal growth, development and dispersal; whereas Class II form highly ordered films at water-air interfaces through intermolecular interactions but contribute nothing to the rodlet structure. The polypeptide is Class I hydrophobin C (Agaricus bisporus (White button mushroom)).